Here is a 409-residue protein sequence, read N- to C-terminus: MFSVIGRGIKFSSKSHYSVSCFLIATQGAKIRQIHTHNTFFKNFSFAKLGRNQRTSSLIKIHNSSTSFPKSRSEKVVYTPSLPLSSSVLASFSFLPHNILQNGLNTLHIWSGLPWWASIAACAVAMRIAVFPIMLKMMKTSAKLAIINPKVAEHMSVLSKAKAEGNSELMMQATTQIQNLYKVNNVNPLNLLSAPVFQGILFISFFYALKTMAGVPVEGFTDGGFWWVNDLSQPDPLHIFPVANGLLMLLNIELGSETGSNKVAMSPSMKKFFRFLCLASPLFTMNFPMAIFMYWFPSNVFSVFQGAFLRSSTIRHKLGLPEVPSAMPVPNAQNESFVKSFTDIVHGVQEKGKYPQASEILDATRFLKTDTNNEQKPTNNSTITKATTLSDNSQNDKSSSVTKPTEKKD.

Residues 76–96 (VVYTPSLPLSSSVLASFSFLP) traverse the membrane as a helical segment. The Mitochondrial intermembrane portion of the chain corresponds to 97–114 (HNILQNGLNTLHIWSGLP). Residues 115 to 135 (WWASIAACAVAMRIAVFPIML) traverse the membrane as a helical segment. Over 136–188 (KMMKTSAKLAIINPKVAEHMSVLSKAKAEGNSELMMQATTQIQNLYKVNNVNP) the chain is Mitochondrial matrix. Residues 189–209 (LNLLSAPVFQGILFISFFYAL) traverse the membrane as a helical segment. The Mitochondrial intermembrane segment spans residues 210-235 (KTMAGVPVEGFTDGGFWWVNDLSQPD). The helical transmembrane segment at 236-256 (PLHIFPVANGLLMLLNIELGS) threads the bilayer. Residues 257–275 (ETGSNKVAMSPSMKKFFRF) are Mitochondrial matrix-facing. A helical membrane pass occupies residues 276–296 (LCLASPLFTMNFPMAIFMYWF). At 297–409 (PSNVFSVFQG…SVTKPTEKKD (113 aa)) the chain is on the mitochondrial intermembrane side. Residues 369-409 (TDTNNEQKPTNNSTITKATTLSDNSQNDKSSSVTKPTEKKD) form a disordered region. The segment covering 374 to 403 (EQKPTNNSTITKATTLSDNSQNDKSSSVTK) has biased composition (polar residues).

Belongs to the OXA1/ALB3/YidC family.

The protein resides in the mitochondrion inner membrane. Functionally, required for the insertion of integral membrane proteins into the mitochondrial inner membrane. Essential for the activity and assembly of cytochrome c oxidase. It is essential for viability while oxa101 is not. When both are deleted the cell is non-viable, suggesting that oxa101 act as a back-up for oxa102. This Schizosaccharomyces pombe (strain 972 / ATCC 24843) (Fission yeast) protein is Mitochondrial inner membrane protein oxa1-2 (oxa102).